The primary structure comprises 70 residues: Mu-conotoxin-like Am3.4 (70 aa).

The signal sequence occupies residues 1-20 (MMYKLGVLLIICLLLFPLTA). A propeptide spanning residues 21-53 (VPQDGDQPADRPAERMQDDISFEHDRFFDPVKR) is cleaved from the precursor. Intrachain disulfides connect C54–C69, C55–C65, and C61–C68. A 4-hydroxyproline; partial; in major form modification is found at P67. C69 is modified (cysteine amide).

It belongs to the conotoxin M superfamily. Post-translationally, contains 3 disulfide bonds. As to expression, expressed by the venom duct.

The protein resides in the secreted. Functionally, mu-conotoxins block voltage-gated sodium channels (Nav). The protein is Mu-conotoxin-like Am3.4 of Conus amadis (Amadis cone).